The primary structure comprises 168 residues: NADH-quinone oxidoreductase subunit I (168 aa).

2 consecutive 4Fe-4S ferredoxin-type domains span residues 58-88 and 99-128; these read LRRY…IEAG and VRYD…EGPN. The [4Fe-4S] cluster site is built by cysteine 68, cysteine 71, cysteine 74, cysteine 78, cysteine 108, cysteine 111, cysteine 114, and cysteine 118.

The protein belongs to the complex I 23 kDa subunit family. NDH-1 is composed of 14 different subunits. Subunits NuoA, H, J, K, L, M, N constitute the membrane sector of the complex. It depends on [4Fe-4S] cluster as a cofactor.

Its subcellular location is the cell inner membrane. The catalysed reaction is a quinone + NADH + 5 H(+)(in) = a quinol + NAD(+) + 4 H(+)(out). Its function is as follows. NDH-1 shuttles electrons from NADH, via FMN and iron-sulfur (Fe-S) centers, to quinones in the respiratory chain. The immediate electron acceptor for the enzyme in this species is believed to be ubiquinone. Couples the redox reaction to proton translocation (for every two electrons transferred, four hydrogen ions are translocated across the cytoplasmic membrane), and thus conserves the redox energy in a proton gradient. The polypeptide is NADH-quinone oxidoreductase subunit I (Bradyrhizobium diazoefficiens (strain JCM 10833 / BCRC 13528 / IAM 13628 / NBRC 14792 / USDA 110)).